We begin with the raw amino-acid sequence, 218 residues long: Hypoxanthine-guanine phosphoribosyltransferase (218 aa).

An N-acetylalanine modification is found at Ala-2. A GMP-binding site is contributed by Lys-69. Position 103 is an N6-acetyllysine (Lys-103). Lys-115 is covalently cross-linked (Glycyl lysine isopeptide (Lys-Gly) (interchain with G-Cter in SUMO1); alternate). Lys-115 is covalently cross-linked (Glycyl lysine isopeptide (Lys-Gly) (interchain with G-Cter in SUMO2); alternate). GMP contacts are provided by residues 134–142 (EDIIDTGKT), Lys-166, 186–188 (KFV), and Asp-194. The Proton acceptor role is filled by Asp-138. A Phosphothreonine modification is found at Thr-142. Asp-194 is a binding site for Mg(2+).

This sequence belongs to the purine/pyrimidine phosphoribosyltransferase family. In terms of assembly, homotetramer. Mg(2+) is required as a cofactor.

It localises to the cytoplasm. The catalysed reaction is IMP + diphosphate = hypoxanthine + 5-phospho-alpha-D-ribose 1-diphosphate. It catalyses the reaction GMP + diphosphate = guanine + 5-phospho-alpha-D-ribose 1-diphosphate. Its pathway is purine metabolism; IMP biosynthesis via salvage pathway; IMP from hypoxanthine: step 1/1. Its function is as follows. Converts guanine to guanosine monophosphate, and hypoxanthine to inosine monophosphate. Transfers the 5-phosphoribosyl group from 5-phosphoribosylpyrophosphate onto the purine. Plays a central role in the generation of purine nucleotides through the purine salvage pathway. This is Hypoxanthine-guanine phosphoribosyltransferase (HPRT1) from Canis lupus familiaris (Dog).